Consider the following 147-residue polypeptide: MLKPMALITPITAMAFDYGTRRVGVAVGNSVTKAGEPLKTIAAPNSDTLFKDIEQLLAEWQPNQLVVGHPTHPDGAPHEMTAKAIRFGNQLHGRFQLPVAWVDERYTSAVLEGDAQMRDNLDAHSATLILEQYFSELDTNLNTKAAD.

It belongs to the YqgF nuclease family.

Its subcellular location is the cytoplasm. In terms of biological role, could be a nuclease involved in processing of the 5'-end of pre-16S rRNA. The protein is Putative pre-16S rRNA nuclease of Polynucleobacter necessarius subsp. necessarius (strain STIR1).